We begin with the raw amino-acid sequence, 67 residues long: Preprofallaxidin-1 (67 aa).

Positions 1–22 are cleaved as a signal peptide; that stretch reads MASLKKSLFLVLFLGMVSLSIC. Positions 23–46 are excised as a propeptide; the sequence is DKEKREGENEEEEEEHEEESEEKR. Positions 24-46 are disordered; that stretch reads KEKREGENEEEEEEHEEESEEKR. Acidic residues predominate over residues 30 to 42; that stretch reads ENEEEEEEHEEES.

As to expression, expressed by the skin glands.

It localises to the secreted. Fallaxidin-4.1 shows antibacterial activity against the Gram-positive bacteria L.lactis (MIC=12 uM), M.luteus (MIC=100 uM), S.epidermidis (MIC=100 uM) and S.uberis (MIC=50 uM). No antibacterial activity against the Gram-positive bacteria B.cereus, E.faecalis, L.innocua, S.aureus, or the Gram-negative bacteria E.cloacae and E.coli. Inhibits the formation of NO by neuronal nitric oxide synthase with an IC(50) of 13.3 uM. This chain is Preprofallaxidin-1, found in Litoria fallax (Eastern dwarf tree frog).